Here is a 950-residue protein sequence, read N- to C-terminus: Glycine dehydrogenase (decarboxylating) 1 (950 aa).

Lys-704 bears the N6-(pyridoxal phosphate)lysine mark.

It belongs to the GcvP family. As to quaternary structure, the glycine cleavage system is composed of four proteins: P, T, L and H. Requires pyridoxal 5'-phosphate as cofactor.

The enzyme catalyses N(6)-[(R)-lipoyl]-L-lysyl-[glycine-cleavage complex H protein] + glycine + H(+) = N(6)-[(R)-S(8)-aminomethyldihydrolipoyl]-L-lysyl-[glycine-cleavage complex H protein] + CO2. The glycine cleavage system catalyzes the degradation of glycine. The P protein binds the alpha-amino group of glycine through its pyridoxal phosphate cofactor; CO(2) is released and the remaining methylamine moiety is then transferred to the lipoamide cofactor of the H protein. This is Glycine dehydrogenase (decarboxylating) 1 from Pseudomonas fluorescens (strain Pf0-1).